The sequence spans 122 residues: Large ribosomal subunit protein uL14c (122 aa).

The protein belongs to the universal ribosomal protein uL14 family. In terms of assembly, part of the 50S ribosomal subunit.

Its subcellular location is the plastid. It localises to the chloroplast. Functionally, binds to 23S rRNA. The chain is Large ribosomal subunit protein uL14c from Oenothera biennis (German evening primrose).